A 238-amino-acid chain; its full sequence is tRNA (guanine-N(7)-)-methyltransferase (238 aa).

Positions 71, 96, 123, and 146 each coordinate S-adenosyl-L-methionine. Aspartate 146 is an active-site residue. Residues lysine 150, aspartate 182, and 217 to 220 (TKFE) each bind substrate.

Belongs to the class I-like SAM-binding methyltransferase superfamily. TrmB family.

It catalyses the reaction guanosine(46) in tRNA + S-adenosyl-L-methionine = N(7)-methylguanosine(46) in tRNA + S-adenosyl-L-homocysteine. The protein operates within tRNA modification; N(7)-methylguanine-tRNA biosynthesis. Catalyzes the formation of N(7)-methylguanine at position 46 (m7G46) in tRNA. This is tRNA (guanine-N(7)-)-methyltransferase from Methylobacillus flagellatus (strain ATCC 51484 / DSM 6875 / VKM B-1610 / KT).